We begin with the raw amino-acid sequence, 117 residues long: MTMRATRVGEQMKKELGDIIGRKLKDPRIGFLTVTDVRVSGDLQIAKVYISVLGDEKKREETLKGLAKAKGFIRSELGNRIRLRKTPEIHFEFDESIDYGNRIETLIHELNANKEES.

This sequence belongs to the RbfA family. As to quaternary structure, monomer. Binds 30S ribosomal subunits, but not 50S ribosomal subunits or 70S ribosomes.

It localises to the cytoplasm. In terms of biological role, one of several proteins that assist in the late maturation steps of the functional core of the 30S ribosomal subunit. Associates with free 30S ribosomal subunits (but not with 30S subunits that are part of 70S ribosomes or polysomes). Required for efficient processing of 16S rRNA. May interact with the 5'-terminal helix region of 16S rRNA. The sequence is that of Ribosome-binding factor A from Bacillus licheniformis (strain ATCC 14580 / DSM 13 / JCM 2505 / CCUG 7422 / NBRC 12200 / NCIMB 9375 / NCTC 10341 / NRRL NRS-1264 / Gibson 46).